Consider the following 436-residue polypeptide: GTPase Der (436 aa).

2 consecutive EngA-type G domains span residues Pro-4 to Tyr-167 and Ile-175 to Asn-351. Residues Gly-10 to Ser-17, Asp-57 to Ile-61, Asn-119 to Asp-122, Gly-181 to Ser-188, Asp-229 to Met-233, and Asn-294 to Asp-297 each bind GTP. In terms of domain architecture, KH-like spans Thr-352–Lys-436.

Belongs to the TRAFAC class TrmE-Era-EngA-EngB-Septin-like GTPase superfamily. EngA (Der) GTPase family. As to quaternary structure, associates with the 50S ribosomal subunit.

GTPase that plays an essential role in the late steps of ribosome biogenesis. The protein is GTPase Der of Streptococcus pneumoniae (strain JJA).